The chain runs to 348 residues: Phospho-2-dehydro-3-deoxyheptonate aldolase, Trp-sensitive (348 aa).

The protein belongs to the class-I DAHP synthase family.

The enzyme catalyses D-erythrose 4-phosphate + phosphoenolpyruvate + H2O = 7-phospho-2-dehydro-3-deoxy-D-arabino-heptonate + phosphate. It functions in the pathway metabolic intermediate biosynthesis; chorismate biosynthesis; chorismate from D-erythrose 4-phosphate and phosphoenolpyruvate: step 1/7. In terms of biological role, stereospecific condensation of phosphoenolpyruvate (PEP) and D-erythrose-4-phosphate (E4P) giving rise to 3-deoxy-D-arabino-heptulosonate-7-phosphate (DAHP). The sequence is that of Phospho-2-dehydro-3-deoxyheptonate aldolase, Trp-sensitive (aroH) from Buchnera aphidicola subsp. Schizaphis graminum (strain Sg).